Here is a 348-residue protein sequence, read N- to C-terminus: Trace amine-associated receptor 9 (348 aa).

Residues 1 to 33 (MVNNFSQAEAVELCYKNVNESCIKTPYSPGPRS) are Extracellular-facing. N-linked (GlcNAc...) asparagine glycosylation is found at asparagine 4 and asparagine 19. 2 disulfides stabilise this stretch: cysteine 22–cysteine 186 and cysteine 105–cysteine 190. Residues 34–58 (ILYAVLGFGAVLAAFGNLLVMIAIL) form a helical membrane-spanning segment. At 59–68 (HFKQLHTPTN) the chain is on the cytoplasmic side. The helical transmembrane segment at 69 to 90 (FLIASLACADFLVGVTVMPFST) threads the bilayer. The Extracellular segment spans residues 91-105 (VRSVESCWYFGDSYC). Residues 106–128 (KFHTCFDTSFCFASLFHLCCISV) form a helical membrane-spanning segment. Positions 112 and 113 each coordinate spermidine. Topologically, residues 129-148 (DRYIAVTDPLTYPTKFTVSV) are cytoplasmic. A helical membrane pass occupies residues 149 to 170 (SGICIVLSWFFSVTYSFSIFYT). At 171 to 196 (GANEEGIEELVVALTCVGGCQAPLNQ) the chain is on the extracellular side. The tract at residues 174–187 (EEGIEELVVALTCV) is extracellular Loop 2 (ECL2). Residues 197–218 (NWVLLCFLLFFIPNVAMVFIYS) traverse the membrane as a helical segment. Over 219–256 (KIFLVAKHQARKIESTASQAQSSSESYKERVAKRERKA) the chain is Cytoplasmic. Residues 257–280 (AKTLGIAMAAFLVSWLPYLVDAVI) traverse the membrane as a helical segment. At 281-293 (DAYMNFITPPYVY) the chain is on the extracellular side. The chain crosses the membrane as a helical span at residues 294–314 (EILVWCVYYNSAMNPLIYAFF). Topologically, residues 315 to 348 (YQWFGKAIKLIVSGKVLRTDSSTTNLFSEEVETD) are cytoplasmic.

Belongs to the G-protein coupled receptor 1 family.

The protein resides in the cell membrane. Its function is as follows. Olfactory receptor specific for trace amines, such as N,N-dimethylcyclohexylamine (DMCHA) and beta-phenylethylamine (beta-PEA). In contrast to mouse and rat orthologs, not activated by triethylamine, cadaverine (CAD) or spermidine. Trace amine compounds are enriched in animal body fluids and act on trace amine-associated receptors (TAARs) to elicit both intraspecific and interspecific innate behaviors. Trace amine-binding causes a conformation change that triggers signaling via G(s)-class of G alpha proteins (GNAL or GNAS). In mature olfactory sensory neurons, TAAR9 is coupled with GNAL/G(olf)G alpha protein and mediates activation of adenylate cyclase activity to activate cAMP signaling and eventually transmit odorant signals to achieve membrane depolarization. In immature olfactory sensory neurons, TAAR9 is coupled with GNAS/G(s) G alpha proteins. The protein is Trace amine-associated receptor 9 of Homo sapiens (Human).